A 238-amino-acid chain; its full sequence is Ribonuclease PH (238 aa).

Residues arginine 86 and 124-126 (GTR) contribute to the phosphate site.

The protein belongs to the RNase PH family. In terms of assembly, homohexameric ring arranged as a trimer of dimers.

The catalysed reaction is tRNA(n+1) + phosphate = tRNA(n) + a ribonucleoside 5'-diphosphate. Phosphorolytic 3'-5' exoribonuclease that plays an important role in tRNA 3'-end maturation. Removes nucleotide residues following the 3'-CCA terminus of tRNAs; can also add nucleotides to the ends of RNA molecules by using nucleoside diphosphates as substrates, but this may not be physiologically important. Probably plays a role in initiation of 16S rRNA degradation (leading to ribosome degradation) during starvation. The chain is Ribonuclease PH from Vibrio vulnificus (strain CMCP6).